The primary structure comprises 110 residues: Protein YcgL (110 aa).

The YcgL domain occupies 14 to 98; it reads MFCVIYRSSK…PPEDLLKQHL (85 aa). The disordered stretch occupies residues 88-110; that stretch reads PPPEDLLKQHLSSVGQNTSHADR. Residues 97-110 show a composition bias toward polar residues; the sequence is HLSSVGQNTSHADR.

This Salmonella schwarzengrund (strain CVM19633) protein is Protein YcgL.